Reading from the N-terminus, the 254-residue chain is Serotonin N-acetyltransferase 1, chloroplastic (254 aa).

The transit peptide at 1–83 directs the protein to the chloroplast; it reads MASAASASAS…NSTETVEPPS (83 aa). An N-acetyltransferase domain is found at 119 to 254; that stretch reads VNVYDLQALC…IKGMFWYPRF (136 aa).

The protein resides in the plastid. It localises to the chloroplast. It is found in the nucleus. The catalysed reaction is a 2-arylethylamine + acetyl-CoA = an N-acetyl-2-arylethylamine + CoA + H(+). The protein operates within aromatic compound metabolism; melatonin biosynthesis; melatonin from serotonin: step 1/2. Catalyzes the N-acetylation of serotonin into N-acetylserotonin, the penultimate step in the synthesis of melatonin. Catalyzes in vitro the N-acetylation of tryptamine to produce N-acetyltryptamine, 5-methoxytryptamine to produce melatonin and tyramine to produce N-acetyltyramine. Acetyltransferase required for geminivirus infection and systemic spread. In Oryza sativa subsp. indica (Rice), this protein is Serotonin N-acetyltransferase 1, chloroplastic.